Consider the following 598-residue polypeptide: MDKSKIRNFSIIAHIDHGKSTLADRILELTETVEKRDLKAQHLDSMDLEKERGITIKLNAVQIKYKDYVFHLIDTPGHVDFTYEVSRSLAASEGAILLVDATQGIEAQTLANVYLAMDNGLEIIPVINKIDLPSSDPEAVKKEIEEVIGIDASDAILISAKTGKNIEDVLKAVIEKIPAPKNADDNKPLKALVFDSYYDQYRGVVLLIRIFEGKIKVGDEFFFMQSKNKFHATELGVRKPVELKKDSLEAGEVGWLSASIRNAKDVSVGDTITLYNNPTEKPLQGYKKLKPVVYTGFFPIDSQDYDDLKESLIKISLSDSSISFEPETSKALGFGFRVGFLGMLHMEILQERLSREFNIDLIATAPSVEFHVTTTNGEMLSISNPSLLPEKNYIQKIEEPYIKASIILPKEYVGAVMEMCQGKRGVYQDLEFLDENRRRLVYNLPLSEIVFDFFDRLKSLTKGYASFDYEIIGYLESDLIKVDVLLNGEKIDALAIIVHKDFAYSRGRDLTVKLKEVIPRQNFEIPVQAAIGAKVIARETIKAYRKDVTAKLYGGDVTRRQKLLKKQKAGKKRMKSIGSVEIPQEAFLAILETDVTKK.

The 178-residue stretch at 4–181 (SKIRNFSIIA…AVIEKIPAPK (178 aa)) folds into the tr-type G domain. Residues 16-21 (DHGKST) and 128-131 (NKID) contribute to the GTP site.

It belongs to the TRAFAC class translation factor GTPase superfamily. Classic translation factor GTPase family. LepA subfamily.

It is found in the cell membrane. It catalyses the reaction GTP + H2O = GDP + phosphate + H(+). Required for accurate and efficient protein synthesis under certain stress conditions. May act as a fidelity factor of the translation reaction, by catalyzing a one-codon backward translocation of tRNAs on improperly translocated ribosomes. Back-translocation proceeds from a post-translocation (POST) complex to a pre-translocation (PRE) complex, thus giving elongation factor G a second chance to translocate the tRNAs correctly. Binds to ribosomes in a GTP-dependent manner. In Mycoplasma mobile (strain ATCC 43663 / 163K / NCTC 11711) (Mesomycoplasma mobile), this protein is Elongation factor 4.